A 355-amino-acid polypeptide reads, in one-letter code: Uroporphyrinogen decarboxylase (355 aa).

Substrate is bound by residues 27–31, Phe-46, Asp-77, Tyr-154, Thr-209, and His-328; that span reads RQAGR.

It belongs to the uroporphyrinogen decarboxylase family. Homodimer.

It is found in the cytoplasm. The enzyme catalyses uroporphyrinogen III + 4 H(+) = coproporphyrinogen III + 4 CO2. The protein operates within porphyrin-containing compound metabolism; protoporphyrin-IX biosynthesis; coproporphyrinogen-III from 5-aminolevulinate: step 4/4. Its function is as follows. Catalyzes the decarboxylation of four acetate groups of uroporphyrinogen-III to yield coproporphyrinogen-III. The chain is Uroporphyrinogen decarboxylase from Vibrio vulnificus (strain CMCP6).